The following is a 162-amino-acid chain: Small ribosomal subunit protein uS7m (162 aa).

This sequence belongs to the universal ribosomal protein uS7 family. Part of the small ribosomal subunit.

It localises to the mitochondrion. Its function is as follows. One of the primary rRNA binding proteins, it binds directly to 16S-like rRNA where it nucleates assembly of the head domain of the small subunit. This chain is Small ribosomal subunit protein uS7m (mrps7), found in Dictyostelium citrinum (Slime mold).